The primary structure comprises 412 residues: Translation initiation factor 2 subunit gamma (412 aa).

In terms of domain architecture, tr-type G spans 8–205; that stretch reads QAEMNIGMVG…AMYEHFEPPE (198 aa). Residues 17–24 form a G1 region; it reads GHVDHGKT. 4 residues coordinate Mg(2+): Asp-20, Thr-24, Gly-45, and Ser-47. 20-25 provides a ligand contact to GTP; that stretch reads DHGKTT. The interval 45 to 49 is G2; it reads GISIR. The Zn(2+) site is built by Cys-60, Cys-63, Cys-72, and Cys-75. Positions 89–92 are G3; that stretch reads DSPG. GTP is bound by residues 145-148 and 183-185; these read NKID and SAQ. Residues 145 to 148 form a G4 region; it reads NKID. The interval 183–185 is G5; it reads SAQ.

Belongs to the TRAFAC class translation factor GTPase superfamily. Classic translation factor GTPase family. EIF2G subfamily. In terms of assembly, heterotrimer composed of an alpha, a beta and a gamma chain. The cofactor is Mg(2+).

It catalyses the reaction GTP + H2O = GDP + phosphate + H(+). EIF-2 functions in the early steps of protein synthesis by forming a ternary complex with GTP and initiator tRNA. The protein is Translation initiation factor 2 subunit gamma of Methanopyrus kandleri (strain AV19 / DSM 6324 / JCM 9639 / NBRC 100938).